Consider the following 227-residue polypeptide: MLTWTPLESNPEVLTKYIHKLGVSPAWSVTDVIGLEDDTLEWIPRPVKAFILLFPCSETYEKHRAEEHDRIKEVEEQHPEDLFYMRQFTHNACGTVALIHSVANNKEVDIDRGVLKDFLEKTASLSPEERGRALEKDEKFTADHEALAQEGQTNAANHEKVIHHFIALVNKEGTLYELDGRKSFPIKHGPTSEETFVKDAAKVCKEFMARDPNEVRFTVLALTAAQQ.

The UCH catalytic domain occupies 3–224 (TWTPLESNPE…VRFTVLALTA (222 aa)). The Nucleophile role is filled by Cys93. His164 (proton donor) is an active-site residue.

The protein belongs to the peptidase C12 family.

The catalysed reaction is Thiol-dependent hydrolysis of ester, thioester, amide, peptide and isopeptide bonds formed by the C-terminal Gly of ubiquitin (a 76-residue protein attached to proteins as an intracellular targeting signal).. Its function is as follows. Ubiquitin-protein hydrolase is involved both in the processing of ubiquitin precursors and of ubiquitinated proteins. This enzyme is a thiol protease that recognizes and hydrolyzes a peptide bond at the C-terminal glycine of ubiquitin. The polypeptide is Ubiquitin carboxyl-terminal hydrolase (Uch) (Drosophila melanogaster (Fruit fly)).